Consider the following 536-residue polypeptide: uncharacterized protein (536 aa).

The SWIM-type zinc-finger motif lies at 71-98 (LFVIVKSGCSCPSGRICRHMLAVFLYVY). Positions 482–528 (YKEAARYLKKLRTLYKKAKKQKVWERYIQLLSSHYKRLRALQEELQK) form a coiled coil.

This is an uncharacterized protein from Bacillus subtilis (strain 168).